We begin with the raw amino-acid sequence, 81 residues long: Photosystem I iron-sulfur center (81 aa).

2 4Fe-4S ferredoxin-type domains span residues 2-31 (SHSVKVYDTCIGCTQCVRACPCDVLEMVAW) and 39-68 (IASAPRTEDCIGCKRCETACPTDFLSVRVY). Residues Cys11, Cys14, Cys17, Cys21, Cys48, Cys51, Cys54, and Cys58 each contribute to the [4Fe-4S] cluster site.

In terms of assembly, the eukaryotic PSI reaction center is composed of at least 11 subunits. Requires [4Fe-4S] cluster as cofactor.

The protein localises to the plastid. It is found in the chloroplast thylakoid membrane. It catalyses the reaction reduced [plastocyanin] + hnu + oxidized [2Fe-2S]-[ferredoxin] = oxidized [plastocyanin] + reduced [2Fe-2S]-[ferredoxin]. In terms of biological role, apoprotein for the two 4Fe-4S centers FA and FB of photosystem I (PSI); essential for photochemical activity. FB is the terminal electron acceptor of PSI, donating electrons to ferredoxin. The C-terminus interacts with PsaA/B/D and helps assemble the protein into the PSI complex. Required for binding of PsaD and PsaE to PSI. PSI is a plastocyanin/cytochrome c6-ferredoxin oxidoreductase, converting photonic excitation into a charge separation, which transfers an electron from the donor P700 chlorophyll pair to the spectroscopically characterized acceptors A0, A1, FX, FA and FB in turn. The protein is Photosystem I iron-sulfur center of Guillardia theta (Cryptophyte).